The primary structure comprises 426 residues: Probable serine/threonine-protein kinase PBL2 (426 aa).

Residues 1–54 (MGNCLDSSAKVDNSNHSPHANSASSGSKVSSKTSRSTGPSGLSTTSYSTDSSFG) are disordered. G2 is lipidated: N-myristoyl glycine. C4 carries S-palmitoyl cysteine lipidation. Over residues 14–38 (SNHSPHANSASSGSKVSSKTSRSTG) the composition is skewed to low complexity. A compositionally biased stretch (polar residues) spans 39–52 (PSGLSTTSYSTDSS). The residue at position 75 (T75) is a Phosphothreonine. One can recognise a Protein kinase domain in the interval 86–369 (FRQDNLLGEG…SEVLVTLEQL (284 aa)). ATP is bound by residues 92–100 (LGEGGFGCV) and K124. Residue Y169 is modified to Phosphotyrosine. Catalysis depends on D219, which acts as the Proton acceptor. O-UMP-serine is present on S253. At S253 the chain carries Phosphoserine. Phosphothreonine is present on residues T254 and T259. T254 carries the post-translational modification O-UMP-threonine. Residue Y267 is modified to Phosphotyrosine. A disordered region spans residues 374–426 (KPGTKHTQMESPRFHHSSVMQKSPVRYSHDRPLLHMTPGASPLPSYTQSPRVR). Residues 417-426 (PSYTQSPRVR) show a composition bias toward polar residues.

This sequence belongs to the protein kinase superfamily. Ser/Thr protein kinase family. As to quaternary structure, interacts with FLS2. Interacts with the Xanthomonas campestris effector XopAC/AvrAC; the recognition of X.campestris effector XopAC/AvrAC requires the presence of RKS1 and RPP13L4/ZAR1. Component of a stable high-order oligomeric complex made of RKS1 and RPP13L4/ZAR1 which recruits X.campestris effector XopAC/AvrAC-mediated uridylylated PBL2 in the presence of ATP to form a wheel-like pentameric resistosome; this complex triggers immunity toward X.campestris in vascular tissues. Binds to RKS1 when uridylylated. Post-translationally, uridylylated at Ser-253 and Thr-254 by Xanthomonas campestris effector AvrAC/XopAC; this uridylylation is necessary for specific recruitment to RKS1 and to trigger immunity. In terms of tissue distribution, strongly expressed in leaves, moderately in roots, and barely in flowers, mostly in pedicels.

The protein localises to the cell membrane. It localises to the nucleus. It carries out the reaction L-seryl-[protein] + ATP = O-phospho-L-seryl-[protein] + ADP + H(+). The enzyme catalyses L-threonyl-[protein] + ATP = O-phospho-L-threonyl-[protein] + ADP + H(+). Involved in disease resistance signaling. Contributes to pathogen-associated molecular pattern (PAMP)-triggered immunity (PTI) signaling and defense responses downstream of FLS2. Acts as a BIK1 decoy and enables Xanthomonas campestris AvrAC/XopAC detection; X.campestris effector AvrAC/XopAC-mediated uridylylation promotes the formation of a complex with RKS1 and RPP13L4/ZAR1 which, in turn, activates effector-triggered immunity (ETI) against X.campestris. Promotes, when uridylylated by AvrAC/XopAC, the release of ADP from the inactive RKS1-ZAR1 complex, thus activating the resistosome. The chain is Probable serine/threonine-protein kinase PBL2 from Arabidopsis thaliana (Mouse-ear cress).